The primary structure comprises 557 residues: Phosphoribosylaminoimidazole carboxylase, chloroplastic (557 aa).

The ATP-grasp domain maps to 108 to 293 (KVALLPAWIP…QFEQHLPAVV (186 aa)). ATP is bound at residue 132-189 (WDSLDIHFMIKSRRLAYDGRGNFVAKSEEELSSAVDALGGFDRGLYAEKWAPFVKELA). The tract at residues 387-557 (CSTLLGFIMG…HGWESYLKNS (171 aa)) is AIR carboxylase catalytic subunit.

It in the C-terminal section; belongs to the AIR carboxylase family. Class I subfamily.

Its subcellular location is the plastid. The protein resides in the chloroplast. The catalysed reaction is 5-amino-1-(5-phospho-D-ribosyl)imidazole-4-carboxylate + H(+) = 5-amino-1-(5-phospho-beta-D-ribosyl)imidazole + CO2. It participates in purine metabolism; IMP biosynthesis via de novo pathway; 5-amino-1-(5-phospho-D-ribosyl)imidazole-4-carboxylate from 5-amino-1-(5-phospho-D-ribosyl)imidazole (carboxylase route): step 1/1. The chain is Phosphoribosylaminoimidazole carboxylase, chloroplastic (PURKE) from Vigna aconitifolia (Moth bean).